A 231-amino-acid polypeptide reads, in one-letter code: GFP-like fluorescent chromoprotein FP506 (231 aa).

A cross-link (5-imidazolinone (Asn-Gly)) is located at residues 66-68 (NYG). Tyrosine 67 carries the 2,3-didehydrotyrosine modification.

Belongs to the GFP family. Contains a chromophore consisting of modified amino acid residues. The chromophore is formed by autocatalytic backbone condensation between Xaa-N and Gly-(N+2), and oxidation of Tyr-(N+1) to didehydrotyrosine. Maturation of the chromophore requires nothing other than molecular oxygen. The precise stereochemistry of the tyrosine has not been determined. As to expression, tentacle and oral disk.

Its function is as follows. Pigment protein that is yellow-green in color. This Zoanthus sp. (Green polyp) protein is GFP-like fluorescent chromoprotein FP506.